Reading from the N-terminus, the 359-residue chain is F-box protein At5g49610 (359 aa).

Positions 3 to 52 (NQKGALFPDEVILQILARLPVKSLFRFKSVCKSWYRLPSDKYFTSLFNQL) constitute an F-box domain.

Part of a SCF (SKP1-cullin-F-box) protein ligase complex. Interacts with SKP1A, SKP1B, ASK11, ASK12, ASK13 and ASK14.

Its pathway is protein modification; protein ubiquitination. In Arabidopsis thaliana (Mouse-ear cress), this protein is F-box protein At5g49610.